The chain runs to 400 residues: CinA-like protein (400 aa).

Belongs to the CinA family.

In Escherichia coli O9:H4 (strain HS), this protein is CinA-like protein.